We begin with the raw amino-acid sequence, 182 residues long: Adenine phosphoribosyltransferase (182 aa).

Belongs to the purine/pyrimidine phosphoribosyltransferase family. Homodimer.

It is found in the cytoplasm. The enzyme catalyses AMP + diphosphate = 5-phospho-alpha-D-ribose 1-diphosphate + adenine. Its pathway is purine metabolism; AMP biosynthesis via salvage pathway; AMP from adenine: step 1/1. Catalyzes a salvage reaction resulting in the formation of AMP, that is energically less costly than de novo synthesis. The protein is Adenine phosphoribosyltransferase of Campylobacter curvus (strain 525.92).